A 304-amino-acid chain; its full sequence is tRNA-uridine aminocarboxypropyltransferase 1 (304 aa).

2 disordered regions span residues Met1–Ser29 and Arg165–Thr193. A compositionally biased stretch (basic and acidic residues) spans Arg180–Thr193. The DXTW motif lies at Asp206–Trp209.

It belongs to the TDD superfamily. DTWD1 family.

The protein resides in the nucleus. It carries out the reaction a uridine in tRNA + S-adenosyl-L-methionine = a 3-[(3S)-3-amino-3-carboxypropyl]uridine in tRNA + S-methyl-5'-thioadenosine + H(+). Catalyzes the formation of 3-(3-amino-3-carboxypropyl)uridine (acp3U) at position 20 in the D-loop of several cytoplasmic tRNAs (acp3U(20)). This is tRNA-uridine aminocarboxypropyltransferase 1 from Mus musculus (Mouse).